The sequence spans 490 residues: UDP-glucosyl transferase 73M2 (490 aa).

The active-site Proton acceptor is the His20. The active-site Charge relay is the Asp124. Residues Ser297, Trp353, Ala354, His371, Asn375, Ser376, Glu379, and Tyr393 each coordinate UDP.

The protein belongs to the UDP-glycosyltransferase family. As to expression, mainly expressed in flowers, flower buds and young leaves, and, to a lesser extent, in old leaves, stems and roots.

The protein operates within secondary metabolite biosynthesis; terpenoid biosynthesis. In terms of biological role, component of the oleanane-type triterpene saponins (e.g. saponarioside A and saponarioside B) biosynthetic pathway, leading to the production of natural products with detergent properties used as traditional sources of soap. A glycosyltransferase that mediates the conversion of QA-triFRX to QA-triFRXX via the elongation of the C-28 sugar chain with a D-xylose. This Saponaria officinalis (Common soapwort) protein is UDP-glucosyl transferase 73M2.